We begin with the raw amino-acid sequence, 436 residues long: Enolase (436 aa).

Residue Q167 participates in (2R)-2-phosphoglycerate binding. E209 acts as the Proton donor in catalysis. Positions 246, 291, and 318 each coordinate Mg(2+). The (2R)-2-phosphoglycerate site is built by K343, R372, S373, and K394. K343 (proton acceptor) is an active-site residue.

This sequence belongs to the enolase family. As to quaternary structure, component of the RNA degradosome, a multiprotein complex involved in RNA processing and mRNA degradation. Requires Mg(2+) as cofactor.

The protein resides in the cytoplasm. The protein localises to the secreted. Its subcellular location is the cell surface. It catalyses the reaction (2R)-2-phosphoglycerate = phosphoenolpyruvate + H2O. Its pathway is carbohydrate degradation; glycolysis; pyruvate from D-glyceraldehyde 3-phosphate: step 4/5. In terms of biological role, catalyzes the reversible conversion of 2-phosphoglycerate (2-PG) into phosphoenolpyruvate (PEP). It is essential for the degradation of carbohydrates via glycolysis. This chain is Enolase, found in Haemophilus influenzae (strain 86-028NP).